We begin with the raw amino-acid sequence, 403 residues long: MTELQVDPAASADPAAAADTPRHPAATLPPDSVGLVVPERMHFAEPLPLRNGSQLVGYDLMVETYGTLNAERSNAVLICHALNASHHVAGVHAEGEVGWWDNMVGPGKPVDTNRFFVIGVNNLGSCFGSTGPMSPHPQTGQPYGARFPVVTVEDWVNAQARVADRFGIRQFAAVMGGSLGGMQALAWSLMYPERVRHCVVVASTPKLSAQNIAFNEVARSAILSDPDFHGGDYYAHNVKPKRGLRVARMIGHITYLSDEDMAEKFGRELKAEDIRFSFDVEFQVESYLRYQGDKFAEYFDANTYLLITRALDYFDPALAYEGSLTRAVAHTRASYLVVSFTTDWRFAPARSRELVKALLDNKRPVTYGEIDAPHGHDAFLLEDARYHALVRAYYERIAQEIGA.

Residues 1–31 form a disordered region; sequence MTELQVDPAASADPAAAADTPRHPAATLPPD. Over residues 7 to 26 the composition is skewed to low complexity; it reads DPAASADPAAAADTPRHPAA. One can recognise an AB hydrolase-1 domain in the interval 74–383; sequence NAVLICHALN…HGHDAFLLED (310 aa). The active-site Nucleophile is S178. Position 248 (R248) interacts with substrate. Residues D343 and H376 contribute to the active site. Residue D377 participates in substrate binding.

It belongs to the AB hydrolase superfamily. MetX family. As to quaternary structure, homodimer.

The protein resides in the cytoplasm. It carries out the reaction L-homoserine + succinyl-CoA = O-succinyl-L-homoserine + CoA. It participates in amino-acid biosynthesis; L-methionine biosynthesis via de novo pathway; O-succinyl-L-homoserine from L-homoserine: step 1/1. Transfers a succinyl group from succinyl-CoA to L-homoserine, forming succinyl-L-homoserine. This chain is Homoserine O-succinyltransferase, found in Ralstonia nicotianae (strain ATCC BAA-1114 / GMI1000) (Ralstonia solanacearum).